Consider the following 360-residue polypeptide: Phospho-N-acetylmuramoyl-pentapeptide-transferase (360 aa).

10 helical membrane-spanning segments follow: residues 26–46 (AILGVLTALIIAFLVGPAMIR), 70–90 (GTPTMGGALILVAVAVSTLLW), 97–117 (FVWVVLMVTLLFGLIGGIDDY), 134–154 (FFWQSVVGFATAILLYYTAQA), 168–188 (VAIQLGPWFILLTWFVIVGAS), 199–219 (GLAIMPTVLVAGAFGVFAYLS), 236–256 (VGDLVVFTGALVGAGLGFLWF), 263–283 (VFMGDVGALALGAALGVLAVV), 288–308 (IVLVIMGGVFVVETLSVIMQV), and 338–358 (VIVRFWIITVILVLVGLATLK).

This sequence belongs to the glycosyltransferase 4 family. MraY subfamily. Mg(2+) serves as cofactor.

Its subcellular location is the cell inner membrane. The enzyme catalyses UDP-N-acetyl-alpha-D-muramoyl-L-alanyl-gamma-D-glutamyl-meso-2,6-diaminopimeloyl-D-alanyl-D-alanine + di-trans,octa-cis-undecaprenyl phosphate = di-trans,octa-cis-undecaprenyl diphospho-N-acetyl-alpha-D-muramoyl-L-alanyl-D-glutamyl-meso-2,6-diaminopimeloyl-D-alanyl-D-alanine + UMP. It functions in the pathway cell wall biogenesis; peptidoglycan biosynthesis. Catalyzes the initial step of the lipid cycle reactions in the biosynthesis of the cell wall peptidoglycan: transfers peptidoglycan precursor phospho-MurNAc-pentapeptide from UDP-MurNAc-pentapeptide onto the lipid carrier undecaprenyl phosphate, yielding undecaprenyl-pyrophosphoryl-MurNAc-pentapeptide, known as lipid I. This is Phospho-N-acetylmuramoyl-pentapeptide-transferase from Thioalkalivibrio sulfidiphilus (strain HL-EbGR7).